We begin with the raw amino-acid sequence, 490 residues long: MNAPVTPKKLIKGALGDWEVVIGMEIHAQVTSRSKLFSGASTAFGAEPNAHVSLVDAAMPGMLPVINRECVAQAVRTGLGLKAQINHRSVFDRKNYFYPDLPQGYQISQYKSPIVGEGEVLVDLPDGETIRVGIERLHLEQDAGKSLHDQHPSLSFVDLNRSGVALMEIVSKPDLRSSEEAKAYVTKLRTILRYLGTCDGDMEKGNLRADVNVSVRRPGEPFGTRCEIKNVNSIRFIGQAIETEARRQIAILEDGGWIEQETRLYDPNRNETRSMRSKEEAHDYRYFPDPDLLPLEIEQAFIDGLRTELPELPDAKKARFVAEYGLSAYDATVLVAERASADYFEAVAKGRDGKAAANWVINELFGRLNKEGHGIEGSPVSAAQLGAIIDLIADGTISGKIAKDLFEIVWGEGGDPRAIVESRGLKQVTDTGAIEAAVDQIIAANPDKVAQAKAKPTLLGWFVGQTMKATGGKANPAAVNALLKTKLGIE.

The protein belongs to the GatB/GatE family. GatB subfamily. As to quaternary structure, heterotrimer of A, B and C subunits.

The enzyme catalyses L-glutamyl-tRNA(Gln) + L-glutamine + ATP + H2O = L-glutaminyl-tRNA(Gln) + L-glutamate + ADP + phosphate + H(+). The catalysed reaction is L-aspartyl-tRNA(Asn) + L-glutamine + ATP + H2O = L-asparaginyl-tRNA(Asn) + L-glutamate + ADP + phosphate + 2 H(+). Allows the formation of correctly charged Asn-tRNA(Asn) or Gln-tRNA(Gln) through the transamidation of misacylated Asp-tRNA(Asn) or Glu-tRNA(Gln) in organisms which lack either or both of asparaginyl-tRNA or glutaminyl-tRNA synthetases. The reaction takes place in the presence of glutamine and ATP through an activated phospho-Asp-tRNA(Asn) or phospho-Glu-tRNA(Gln). In Methylobacterium sp. (strain 4-46), this protein is Aspartyl/glutamyl-tRNA(Asn/Gln) amidotransferase subunit B.